Reading from the N-terminus, the 182-residue chain is ATP-dependent protease subunit HslV (182 aa).

Residue Thr-10 is part of the active site. Residues Ala-166, Cys-169, and Ser-172 each coordinate Na(+).

This sequence belongs to the peptidase T1B family. HslV subfamily. As to quaternary structure, a double ring-shaped homohexamer of HslV is capped on each side by a ring-shaped HslU homohexamer. The assembly of the HslU/HslV complex is dependent on binding of ATP.

The protein localises to the cytoplasm. The enzyme catalyses ATP-dependent cleavage of peptide bonds with broad specificity.. Its activity is regulated as follows. Allosterically activated by HslU binding. Its function is as follows. Protease subunit of a proteasome-like degradation complex believed to be a general protein degrading machinery. The sequence is that of ATP-dependent protease subunit HslV from Rickettsia felis (strain ATCC VR-1525 / URRWXCal2) (Rickettsia azadi).